We begin with the raw amino-acid sequence, 452 residues long: Keratin, type I cytoskeletal 15 (452 aa).

The head stretch occupies residues 1–97; sequence MATTFLQTSS…GGDGGLLSGN (97 aa). A phosphoserine mark is found at Ser-15, Ser-16, Ser-28, Ser-33, and Ser-47. A coil 1A region spans residues 98–133; the sequence is EKVTMQNLNDRLASYLDKVRALEQANTELEVKIRDW. In terms of domain architecture, IF rod spans 98–410; sequence EKVTMQNLND…NLLEGQDAKM (313 aa). Position 124 is a phosphothreonine (Thr-124). The linker 1 stretch occupies residues 134-152; the sequence is YQKQSPASPDRDYSHYFKT. Residues 153 to 244 are coil 1B; sequence MEEIRDKILA…KNHEEEMKEF (92 aa). The segment at 245-264 is linker 12; the sequence is SSQLAGQVNVEMDAAPGVDL. The tract at residues 265–406 is coil 2; sequence TRMLAEMREQ…ATYRNLLEGQ (142 aa). Lys-293 is covalently cross-linked (Glycyl lysine isopeptide (Lys-Gly) (interchain with G-Cter in SUMO2)). Thr-294 and Thr-316 each carry phosphothreonine. A tail region spans residues 407–452; that stretch reads DAKMAGIGVREGSSGGGGSSSSSSNFHISVEESVDGKVVSSRKREI. Residues 413–452 form a disordered region; that stretch reads IGVREGSSGGGGSSSSSSNFHISVEESVDGKVVSSRKREI. Residue Lys-443 forms a Glycyl lysine isopeptide (Lys-Gly) (interchain with G-Cter in SUMO1); alternate linkage. A Glycyl lysine isopeptide (Lys-Gly) (interchain with G-Cter in SUMO2); alternate cross-link involves residue Lys-443.

Belongs to the intermediate filament family. Heterotetramer of two type I and two type II keratins. Forms a heterodimer with KRT14. Interacts with PLEC isoform 1C, when in a heterodimer with KRT14. Interacts with NOD2. Expressed strongly in the basal cell layer at the tips of rete-like prominences (RLPs) of adult dorsal tongue, outer root sheath (ORS) of hair follicle and skin epidermis (at protein level).

Functionally, in the absence of KRT14, makes a bona fide, but ultrastructurally distinct keratin filament network with KRT5. The sequence is that of Keratin, type I cytoskeletal 15 (Krt15) from Mus musculus (Mouse).